Consider the following 331-residue polypeptide: Syntaxin-43 (331 aa).

Residues 1–305 (MATRNRTLLF…KAERTQRQGG (305 aa)) are Cytoplasmic-facing. 2 disordered regions span residues 20–45 (VRAP…KSGL) and 59–80 (PNRS…GTIT). Over residues 31-40 (TLTEHNSLTG) the composition is skewed to polar residues. Positions 124-154 (KEDQHQIETLTQEVTFLLKKSEKQLQRLSAA) form a coiled coil. The 63-residue stretch at 235–297 (EEISIEREKE…DDGLKQLQKA (63 aa)) folds into the t-SNARE coiled-coil homology domain. Residues 306–326 (MVMCASVLVILCFIMLVLLIL) form a helical; Anchor for type IV membrane protein membrane-spanning segment. The Vesicular segment spans residues 327–331 (KEILL).

The protein belongs to the syntaxin family. As to quaternary structure, part of the t-SNARE complex. Expressed at low levels in roots, stems, flowers and leaves.

It is found in the golgi apparatus. It localises to the trans-Golgi network membrane. Functionally, contributes to the regulation of secretory and vacuolar transport pathways in the post-Golgi network, and to the maintenance of the Golgi apparatus and trans-Golgi network (TGN) morphologies. Vesicle trafficking protein that functions in the secretory pathway and mediates liposome fusion. Required for extracellular resistance responses to a fungal pathogen. Also involved in the protection of chloroplasts from salicylic acid-dependent biotic stress. The polypeptide is Syntaxin-43 (Arabidopsis thaliana (Mouse-ear cress)).